Reading from the N-terminus, the 238-residue chain is MLRQGRGLSDLRPITMTRHFIKHPEGAVLVEFGDTRVICTASVEESVPPFLRGKGTGWVTAEYSMLPRATHTRSSREAAKGKQSGRTLEIQRLIGRSLRAVTDMTKLGERTIYLDCDVIQADGGTRTASITGAYVALVDAVSALLVQGKITGNPLKEAVAAVSVGIVDGQAVLDLDYQEDSSAEVDMNFVMTSSGRFVEVQGTAEAEPFTLEQMDAMRSLAMTGINQLFTYQQEALAR.

Residues Arg86 and 124 to 126 (GTR) each bind phosphate.

It belongs to the RNase PH family. Homohexameric ring arranged as a trimer of dimers.

The enzyme catalyses tRNA(n+1) + phosphate = tRNA(n) + a ribonucleoside 5'-diphosphate. Functionally, phosphorolytic 3'-5' exoribonuclease that plays an important role in tRNA 3'-end maturation. Removes nucleotide residues following the 3'-CCA terminus of tRNAs; can also add nucleotides to the ends of RNA molecules by using nucleoside diphosphates as substrates, but this may not be physiologically important. Probably plays a role in initiation of 16S rRNA degradation (leading to ribosome degradation) during starvation. This is Ribonuclease PH from Trichlorobacter lovleyi (strain ATCC BAA-1151 / DSM 17278 / SZ) (Geobacter lovleyi).